Reading from the N-terminus, the 597-residue chain is Bromodomain-containing protein 9 (597 aa).

Residues 1 to 10 (MGKKHKKHKA) are compositionally biased toward basic residues. Disordered regions lie at residues 1 to 25 (MGKKHKKHKAEWRSSYEDYADKPLE) and 38 to 138 (EVTE…ENES). 2 stretches are compositionally biased toward basic and acidic residues: residues 11 to 25 (EWRSSYEDYADKPLE) and 50 to 62 (SYYDDRSDHERER). Phosphoserine is present on serine 56. Residues 63-73 (HKEKKKKKKKK) are compositionally biased toward basic residues. The span at 74-85 (SEKEKHLDDEER) shows a compositional bias: basic and acidic residues. The segment covering 86–97 (RKRKEEKKRKRE) has biased composition (basic residues). Positions 111–126 (DPGKKVEVEPPPDRPV) are enriched in basic and acidic residues. A Bromo domain is found at 136–240 (NESTPIQQLL…HAGFKMMSKQ (105 aa)). The segment at 214–216 (TYN) is histone H4K5ac H4K8ac and histone H4K5bu H4K8bu binding. Lysine 373 is modified (N6-acetyllysine; alternate). Lysine 373 is covalently cross-linked (Glycyl lysine isopeptide (Lys-Gly) (interchain with G-Cter in SUMO2); alternate). Residues 536 to 597 (EAQAERGGSR…SPEPAASAKT (62 aa)) are disordered. Residues 544–556 (SRPSSNLSSLSNA) are compositionally biased toward low complexity. Residues serine 566 and serine 588 each carry the phosphoserine modification.

In terms of assembly, binds acetylated histones H3 and H4. Binds butyrylated histone H4. Component of the multiprotein chromatin-remodeling subcomplex SWI/SNF called GBAF, which includes at least BICRA or BICRAL (mutually exclusive), BRD9, SS18, the core BAF subunits, SMARCA2/BRM, SMARCA4/BRG1/BAF190A, ACTL6A/BAF53, SMARCC1/BAF155, and SMARCD1/BAF60A. Interacts (via N-terminal bromodomain) with acetylated RAD54. Interacts (via C-terminus) with RAD51.

Its subcellular location is the nucleus. In terms of biological role, plays a role in chromatin remodeling and regulation of transcription. Acts as a chromatin reader that recognizes and binds acylated histones: binds histones that are acetylated and/or butyrylated. Component of SWI/SNF chromatin remodeling subcomplex GBAF that carries out key enzymatic activities, changing chromatin structure by altering DNA-histone contacts within a nucleosome in an ATP-dependent manner. Also orchestrates the RAD51-RAD54 complex formation and thereby plays a role in homologous recombination (HR). This is Bromodomain-containing protein 9 (BRD9) from Homo sapiens (Human).